A 503-amino-acid chain; its full sequence is MTKAYENRMLLQALVLAAVLCTTHAEGTAKAPLKHSVATGFCSFSKAAKQAANKLAQTLDAVKATLNQNRKAHLQNLLVAVKRPTEQIAALILGQYANTQAASGLSDLGKWAPDETKTIGQALYTSGRLDGFIDVLDGHRSENSGQNKNCIANDGDGTTKAFDFDALCGPTEVAKAGNEPGDLKSSDRNGFWWHRRAAASGGNNHCVIFDDLNTAYSTKTAATDFLAGLIKVHQTTGLTAATAIAAQKSTNKILKDIDANWPKVQQAYTTAAGRSPTTEQEYKDLLKDESSRQKLRAAAQTVNNWKPADKPANMDDYLKQVFKIDANVNSAYVTAMKEISMDVPTKDGETQKKELFEMSEEDLEAALAVEIRRLSSENAKLTTEVKQLRRNQGKQATEDTCNKMKGETACNNKPFCTYNATETDENKKCKFNETKASKSGVSVAQAQTGGTQTTTDKCKDKKKDDCKSPDCKWEGETCKDSSFILNKQFALSVVSAAFAALLF.

An N-terminal signal peptide occupies residues 1-29; that stretch reads MTKAYENRMLLQALVLAAVLCTTHAEGTA. 2 disulfide bridges follow: Cys42-Cys168 and Cys150-Cys206. N-linked (GlcNAc...) asparagine glycans are attached at residues Asn419 and Asn432. The GPI-anchor amidated aspartate moiety is linked to residue Asp480. Residues 481–503 constitute a propeptide, removed in mature form; that stretch reads SSFILNKQFALSVVSAAFAALLF.

The protein localises to the cell membrane. In terms of biological role, VSG forms a coat on the surface of the parasite. The trypanosome evades the immune response of the host by expressing a series of antigenically distinct VSGs from an estimated 1000 VSG genes. This Trypanosoma brucei brucei protein is Variant surface glycoprotein ILTAT 1.3.